A 1390-amino-acid polypeptide reads, in one-letter code: DNA-directed RNA polymerase subunit beta'' (1390 aa).

Positions 224, 294, 301, and 304 each coordinate Zn(2+).

It belongs to the RNA polymerase beta' chain family. RpoC2 subfamily. As to quaternary structure, in plastids the minimal PEP RNA polymerase catalytic core is composed of four subunits: alpha, beta, beta', and beta''. When a (nuclear-encoded) sigma factor is associated with the core the holoenzyme is formed, which can initiate transcription. Zn(2+) serves as cofactor.

The protein localises to the plastid. The protein resides in the chloroplast. It carries out the reaction RNA(n) + a ribonucleoside 5'-triphosphate = RNA(n+1) + diphosphate. In terms of biological role, DNA-dependent RNA polymerase catalyzes the transcription of DNA into RNA using the four ribonucleoside triphosphates as substrates. The protein is DNA-directed RNA polymerase subunit beta'' of Ceratophyllum demersum (Rigid hornwort).